Consider the following 68-residue polypeptide: Protein DsrB (68 aa).

The protein belongs to the DsrB family.

This chain is Protein DsrB, found in Sodalis glossinidius (strain morsitans).